The sequence spans 462 residues: ATP synthase subunit beta (462 aa).

151–158 (GGAGVGKT) provides a ligand contact to ATP.

Belongs to the ATPase alpha/beta chains family. As to quaternary structure, F-type ATPases have 2 components, CF(1) - the catalytic core - and CF(0) - the membrane proton channel. CF(1) has five subunits: alpha(3), beta(3), gamma(1), delta(1), epsilon(1). CF(0) has four main subunits: a(1), b(1), b'(1) and c(9-12).

It is found in the cell inner membrane. The enzyme catalyses ATP + H2O + 4 H(+)(in) = ADP + phosphate + 5 H(+)(out). Functionally, produces ATP from ADP in the presence of a proton gradient across the membrane. The catalytic sites are hosted primarily by the beta subunits. The polypeptide is ATP synthase subunit beta (Chlorobium chlorochromatii (strain CaD3)).